The following is a 141-amino-acid chain: Large ribosomal subunit protein uL11 (141 aa).

Belongs to the universal ribosomal protein uL11 family. Part of the ribosomal stalk of the 50S ribosomal subunit. Interacts with L10 and the large rRNA to form the base of the stalk. L10 forms an elongated spine to which L12 dimers bind in a sequential fashion forming a multimeric L10(L12)X complex. One or more lysine residues are methylated.

In terms of biological role, forms part of the ribosomal stalk which helps the ribosome interact with GTP-bound translation factors. The protein is Large ribosomal subunit protein uL11 of Prosthecochloris aestuarii (strain DSM 271 / SK 413).